The chain runs to 232 residues: Orotidine 5'-phosphate decarboxylase (232 aa).

Substrate contacts are provided by residues aspartate 11, lysine 33, 60–69, threonine 120, arginine 181, glutamine 191, glycine 211, and arginine 212; that span reads DLKFHDIPTT. Residue lysine 62 is the Proton donor of the active site.

Belongs to the OMP decarboxylase family. Type 1 subfamily. In terms of assembly, homodimer.

It carries out the reaction orotidine 5'-phosphate + H(+) = UMP + CO2. The protein operates within pyrimidine metabolism; UMP biosynthesis via de novo pathway; UMP from orotate: step 2/2. In terms of biological role, catalyzes the decarboxylation of orotidine 5'-monophosphate (OMP) to uridine 5'-monophosphate (UMP). The chain is Orotidine 5'-phosphate decarboxylase from Tolumonas auensis (strain DSM 9187 / NBRC 110442 / TA 4).